Here is a 392-residue protein sequence, read N- to C-terminus: Pyruvate synthase subunit PorA (392 aa).

As to quaternary structure, heterotetramer of one alpha, one beta, one delta and one gamma chain.

It carries out the reaction 2 oxidized [2Fe-2S]-[ferredoxin] + pyruvate + CoA = 2 reduced [2Fe-2S]-[ferredoxin] + acetyl-CoA + CO2 + H(+). The sequence is that of Pyruvate synthase subunit PorA (porA) from Thermotoga maritima (strain ATCC 43589 / DSM 3109 / JCM 10099 / NBRC 100826 / MSB8).